The following is a 401-amino-acid chain: Dual-specificity RNA methyltransferase RlmN (401 aa).

Glu-114 functions as the Proton acceptor in the catalytic mechanism. The region spanning 120-365 is the Radical SAM core domain; that stretch reads DKGRGTLCVS…TMVRRTRGDD (246 aa). A disulfide bond links Cys-127 and Cys-370. [4Fe-4S] cluster-binding residues include Cys-134, Cys-138, and Cys-141. S-adenosyl-L-methionine-binding positions include 187–188, Ser-219, 241–243, and Asn-327; these read GE and SLH. The active-site S-methylcysteine intermediate is Cys-370.

This sequence belongs to the radical SAM superfamily. RlmN family. The cofactor is [4Fe-4S] cluster.

It localises to the cytoplasm. It catalyses the reaction adenosine(2503) in 23S rRNA + 2 reduced [2Fe-2S]-[ferredoxin] + 2 S-adenosyl-L-methionine = 2-methyladenosine(2503) in 23S rRNA + 5'-deoxyadenosine + L-methionine + 2 oxidized [2Fe-2S]-[ferredoxin] + S-adenosyl-L-homocysteine. It carries out the reaction adenosine(37) in tRNA + 2 reduced [2Fe-2S]-[ferredoxin] + 2 S-adenosyl-L-methionine = 2-methyladenosine(37) in tRNA + 5'-deoxyadenosine + L-methionine + 2 oxidized [2Fe-2S]-[ferredoxin] + S-adenosyl-L-homocysteine. Functionally, specifically methylates position 2 of adenine 2503 in 23S rRNA and position 2 of adenine 37 in tRNAs. m2A2503 modification seems to play a crucial role in the proofreading step occurring at the peptidyl transferase center and thus would serve to optimize ribosomal fidelity. This is Dual-specificity RNA methyltransferase RlmN from Xanthomonas campestris pv. campestris (strain 8004).